Reading from the N-terminus, the 132-residue chain is Small ribosomal subunit protein uS19 (132 aa).

This sequence belongs to the universal ribosomal protein uS19 family. In terms of assembly, part of the 30S ribosomal subunit.

Functionally, protein S19 forms a complex with S13 that binds strongly to the 16S ribosomal RNA. In Pyrococcus furiosus (strain ATCC 43587 / DSM 3638 / JCM 8422 / Vc1), this protein is Small ribosomal subunit protein uS19.